The sequence spans 962 residues: Protocadherin gamma-A4 (962 aa).

Residues 1 to 24 (MHFILDPEDPGAPQASTEGKPKHR) are disordered. An N-terminal signal peptide occupies residues 1–59 (MHFILDPEDPGAPQASTEGKPKHRRLRGGVVMAAPPARPDHTRLLQICLLLGVLVEIRA). 6 Cadherin domains span residues 60–164 (EQIL…PPSF), 165–273 (GTEQ…APVF), 274–378 (TQPE…APEV), 379–483 (TVTS…PPTF), 484–598 (PHAS…YPTF), and 601–713 (DGST…KPSA). Topologically, residues 60-723 (EQILYSVFEE…DPDDSGLTLY (664 aa)) are extracellular. Asn-450 and Asn-576 each carry an N-linked (GlcNAc...) asparagine glycan. A helical membrane pass occupies residues 724–744 (LVVAVAAVSCVFLAFVTVLLA). Residues 745-962 (LKLRRWHKSR…KKKSGKKEKK (218 aa)) are Cytoplasmic-facing. 2 disordered regions span residues 832-871 (KGDP…WPNN) and 932-962 (ATLT…KEKK). Residues 836–871 (NLQQAPPNTDWRFSQAQRPGTSGSQNGDDTGTWPNN) show a composition bias toward polar residues. The segment covering 952 to 962 (NKKKSGKKEKK) has biased composition (basic residues).

It is found in the cell membrane. Functionally, potential calcium-dependent cell-adhesion protein. May be involved in the establishment and maintenance of specific neuronal connections in the brain. The polypeptide is Protocadherin gamma-A4 (PCDHGA4) (Homo sapiens (Human)).